The primary structure comprises 365 residues: TD and POZ domain-containing protein 1-like (365 aa).

The region spanning 19-149 is the MATH domain; that stretch reads KFCYKWTISN…EDQLTICCKV (131 aa). The BTB domain occupies 188 to 255; sequence TDCCLLVAGH…IYTGKAPYLH (68 aa).

It belongs to the Tdpoz family.

The protein is TD and POZ domain-containing protein 1-like of Mus musculus (Mouse).